Reading from the N-terminus, the 240-residue chain is 14-3-3 protein 3 (240 aa).

The protein belongs to the 14-3-3 family. In terms of assembly, interacts with coactosin. Interacts with ACTO/actophorin.

It is found in the cytoplasm. The protein resides in the cell projection. Its subcellular location is the phagocytic cup. In terms of biological role, adapter protein which is required for phagocytosis and motility, probably by regulating actin cytoskeleton dynamics. During phagocytosis, plays a role in the initiation and/or formation of the phagocytic cup and is involved in the recruitment of the actin binding protein coactosin to the phagocytic cup. The protein is 14-3-3 protein 3 of Entamoeba histolytica (strain ATCC 30459 / HM-1:IMSS / ABRM).